A 101-amino-acid polypeptide reads, in one-letter code: Biogenesis of lysosome-related organelles complex 1 subunit SNN1 (101 aa).

Positions 62–100 form a coiled coil; that stretch reads DSNEYKAQFKEVNNLQKRLQKITLRLKDLERRSSQLTTS.

This sequence belongs to the SNAPIN family. As to quaternary structure, component of the biogenesis of lysosome-related organelles complex-1 (BLOC-1).

It localises to the endosome. Component of the biogenesis of lysosome-related organelles complex-1 (BLOC-1), a complex involved in endosomal cargo sorting. The protein is Biogenesis of lysosome-related organelles complex 1 subunit SNN1 (SNN1) of Candida glabrata (strain ATCC 2001 / BCRC 20586 / JCM 3761 / NBRC 0622 / NRRL Y-65 / CBS 138) (Yeast).